The primary structure comprises 187 residues: TATA-box-binding protein (187 aa).

2 consecutive repeat copies span residues I10–L86 and V101–L179.

Belongs to the TBP family.

Functionally, general factor that plays a role in the activation of archaeal genes transcribed by RNA polymerase. Binds specifically to the TATA box promoter element which lies close to the position of transcription initiation. The polypeptide is TATA-box-binding protein (Natronomonas pharaonis (strain ATCC 35678 / DSM 2160 / CIP 103997 / JCM 8858 / NBRC 14720 / NCIMB 2260 / Gabara) (Halobacterium pharaonis)).